The chain runs to 447 residues: Protein chibby homolog 2 (447 aa).

Phosphoserine is present on residues serine 41, serine 85, serine 88, serine 96, serine 123, serine 143, serine 147, and serine 149. Residues 164 to 197 (EYLLQEENKSLRDENRALRDENKALRKENKILQV) are a coiled coil. Disordered regions lie at residues 208-244 (HEES…KENT) and 266-320 (WAQA…EDSK). Residues serine 211 and serine 224 each carry the phosphoserine modification. Residues 218–232 (LHKDTTSQEVVKKDN) show a composition bias toward basic and acidic residues. Positions 237–264 (AQRSKENTLQFIREENRALQQLLEQRQA) form a coiled coil. Positions 266-276 (WAQAEESATSA) are enriched in low complexity. 2 positions are modified to phosphoserine: serine 272 and serine 275. The span at 277-290 (EEGKPTSSPKEEPH) shows a compositional bias: basic and acidic residues. Phosphoserine occurs at positions 333 and 336. A coiled-coil region spans residues 354 to 412 (LQLLREMNQALQALREENRLLQEENRALHAMREEHRVFQEENKALWENNKLKLQQRLVI).

It belongs to the chibby family. SPERT subfamily. In terms of assembly, homodimer. Binds to NEK1.

The protein is Protein chibby homolog 2 (Cby2) of Rattus norvegicus (Rat).